The chain runs to 406 residues: ESX-5 secretion system protein EccE5 (406 aa).

A run of 2 helical transmembrane segments spans residues 9–29 and 43–63; these read LALS…ILAV and VAWW…VVSY.

It belongs to the EccE family. Part of the ESX-5 / type VII secretion system (T7SS), which is composed of cytosolic and membrane components. The ESX-5 membrane complex is composed of EccB5, EccC5, EccD5 and EccE5.

It is found in the cell inner membrane. Its function is as follows. Part of the ESX-5 specialized secretion system, which is responsible for the secretion of EsxN and a number of PE_PGRS and PPE proteins, including PPE41. The protein is ESX-5 secretion system protein EccE5 of Mycobacterium tuberculosis (strain ATCC 25618 / H37Rv).